The sequence spans 423 residues: Imidazolonepropionase (423 aa).

Positions 78 and 80 each coordinate Fe(3+). 2 residues coordinate Zn(2+): H78 and H80. 3 residues coordinate 4-imidazolone-5-propanoate: R87, Y150, and H183. Residue Y150 coordinates N-formimidoyl-L-glutamate. H247 is a binding site for Fe(3+). Residue H247 participates in Zn(2+) binding. E250 serves as a coordination point for 4-imidazolone-5-propanoate. D322 is a binding site for Fe(3+). D322 is a binding site for Zn(2+). N-formimidoyl-L-glutamate-binding residues include N324 and G326. S327 lines the 4-imidazolone-5-propanoate pocket.

It belongs to the metallo-dependent hydrolases superfamily. HutI family. Zn(2+) serves as cofactor. Requires Fe(3+) as cofactor.

Its subcellular location is the cytoplasm. It carries out the reaction 4-imidazolone-5-propanoate + H2O = N-formimidoyl-L-glutamate. Its pathway is amino-acid degradation; L-histidine degradation into L-glutamate; N-formimidoyl-L-glutamate from L-histidine: step 3/3. In terms of biological role, catalyzes the hydrolytic cleavage of the carbon-nitrogen bond in imidazolone-5-propanoate to yield N-formimidoyl-L-glutamate. It is the third step in the universal histidine degradation pathway. The protein is Imidazolonepropionase of Bacillus thuringiensis (strain Al Hakam).